A 69-amino-acid chain; its full sequence is uncharacterized protein (69 aa).

At 1–15 (MLLYIVIIVACIISK) the chain is on the cytoplasmic side. Residues 16–36 (LVPNEYWAIHLFFIIMIFMVY) traverse the membrane as a helical segment. The Extracellular portion of the chain corresponds to 37–69 (MYKKLDIHQKYQFWNYTMSGLSGHNVQVTCKCY). Asn-51 carries an N-linked (GlcNAc...) asparagine; by host glycan.

It belongs to the asfivirus X69R family.

The protein resides in the host membrane. This is an uncharacterized protein from African swine fever virus (isolate Tick/Malawi/Lil 20-1/1983) (ASFV).